Here is a 128-residue protein sequence, read N- to C-terminus: Aspartate 1-decarboxylase (128 aa).

The Schiff-base intermediate with substrate; via pyruvic acid role is filled by Ser-25. Ser-25 carries the post-translational modification Pyruvic acid (Ser). Thr-57 is a binding site for substrate. Residue Tyr-58 is the Proton donor of the active site. Gly-73 to Ala-75 serves as a coordination point for substrate.

This sequence belongs to the PanD family. Heterooctamer of four alpha and four beta subunits. Requires pyruvate as cofactor. In terms of processing, is synthesized initially as an inactive proenzyme, which is activated by self-cleavage at a specific serine bond to produce a beta-subunit with a hydroxyl group at its C-terminus and an alpha-subunit with a pyruvoyl group at its N-terminus.

The protein resides in the cytoplasm. The catalysed reaction is L-aspartate + H(+) = beta-alanine + CO2. Its pathway is cofactor biosynthesis; (R)-pantothenate biosynthesis; beta-alanine from L-aspartate: step 1/1. In terms of biological role, catalyzes the pyruvoyl-dependent decarboxylation of aspartate to produce beta-alanine. This Staphylococcus epidermidis (strain ATCC 35984 / DSM 28319 / BCRC 17069 / CCUG 31568 / BM 3577 / RP62A) protein is Aspartate 1-decarboxylase.